The chain runs to 726 residues: MKSKIEEPSANGGEAIRFELAHLLGQLLDHRWMIVAVSVLFTLMGTLYSLFATPIYSADAMVQVEQKNANTVLNDISQMMPNAQPASAAEIEIITSRMVLGKTVADLGLDVLVQQDHFPLIGAGLSRIIGQKAQQIAVSRLKVPTLWDKRELSVEVDGPDSYTVSKDGNELFKGKVGQFEQHGDVTMLVNSIEADAGTRFTVSKLNNLQAIKMISNNLVVADMGKDTGVLGLTYSGEDPVQISRVLDQVINNYLYQNIARKSEEAEKSIQFLAQQLPDVRAKLDQAEDKLNVFRRKHDSVDMSLEAKSALDSSVSIQTQLNALTFREAEVSQLFKKDHPTYRALLEKRQTLDEQQKQLNGKISQMPQTQQEIVRLTRDVQAGQEIYMQLLNRQQELNISKASTVGDVRIIDHAETAAKPVAPKSILIVAGSLILGLVVSVGLVLMKALFHHGIDNPEQLEELGLNVYASVPLSEWQRKKDQETLLKRKLDARTDPHNRLLALGNPTDLSIEAIRSLRTSLHFAMMDAQNNILMITGASPGIGKTFVCANLATLVAKTGEKVLFIDGDMRRGYTHELLGAESKTGLSDILSGKLPFNTDLVQRGDYGFDFIARGQVPPNPSELLMNSRMKELVHWASQNYDLVLIDTPPILAVTDASIIGKLAGTSLMVARFETNTVKEVEISYKRFIQNGIDIKGIILNAVVRKSANNYGYGYDYYDYSYQQGEKS.

A run of 2 helical transmembrane segments spans residues 32–52 (WMIVAVSVLFTLMGTLYSLFA) and 425–445 (ILIVAGSLILGLVVSVGLVLM).

This sequence belongs to the etk/wzc family.

It localises to the cell inner membrane. It catalyses the reaction L-tyrosyl-[protein] + ATP = O-phospho-L-tyrosyl-[protein] + ADP + H(+). The protein operates within glycan metabolism; exopolysaccharide biosynthesis. Functionally, involved in the biosynthesis of amylovoran which functions as a virulence factor. The sequence is that of Putative tyrosine-protein kinase AmsA (amsA) from Erwinia amylovora (Fire blight bacteria).